The following is a 288-amino-acid chain: Small ribosomal subunit protein uS3 (288 aa).

In terms of domain architecture, KH type-2 spans 38-106; sequence IRRMMSKGLE…QVQLNIIEVK (69 aa). Positions 209 to 288 are disordered; the sequence is PGRETPAEAP…TQPAETQQEG (80 aa). The span at 219–232 shows a compositional bias: basic and acidic residues; the sequence is SRPRRERGDRSERP. Low complexity predominate over residues 249-264; sequence AGRAAATTIAQAAETP. A compositionally biased stretch (polar residues) spans 277 to 288; that stretch reads AATQPAETQQEG.

It belongs to the universal ribosomal protein uS3 family. As to quaternary structure, part of the 30S ribosomal subunit. Forms a tight complex with proteins S10 and S14.

Its function is as follows. Binds the lower part of the 30S subunit head. Binds mRNA in the 70S ribosome, positioning it for translation. This chain is Small ribosomal subunit protein uS3, found in Salinispora tropica (strain ATCC BAA-916 / DSM 44818 / JCM 13857 / NBRC 105044 / CNB-440).